Consider the following 234-residue polypeptide: Sugar fermentation stimulation protein homolog (234 aa).

This sequence belongs to the SfsA family.

This is Sugar fermentation stimulation protein homolog from Shewanella halifaxensis (strain HAW-EB4).